Here is a 620-residue protein sequence, read N- to C-terminus: Proline--tRNA ligase (620 aa).

Belongs to the class-II aminoacyl-tRNA synthetase family. ProS type 1 subfamily. Homodimer.

Its subcellular location is the cytoplasm. It carries out the reaction tRNA(Pro) + L-proline + ATP = L-prolyl-tRNA(Pro) + AMP + diphosphate. Catalyzes the attachment of proline to tRNA(Pro) in a two-step reaction: proline is first activated by ATP to form Pro-AMP and then transferred to the acceptor end of tRNA(Pro). As ProRS can inadvertently accommodate and process non-cognate amino acids such as alanine and cysteine, to avoid such errors it has two additional distinct editing activities against alanine. One activity is designated as 'pretransfer' editing and involves the tRNA(Pro)-independent hydrolysis of activated Ala-AMP. The other activity is designated 'posttransfer' editing and involves deacylation of mischarged Ala-tRNA(Pro). The misacylated Cys-tRNA(Pro) is not edited by ProRS. This chain is Proline--tRNA ligase, found in Streptococcus thermophilus (strain ATCC BAA-491 / LMD-9).